The following is a 293-amino-acid chain: Ribosomal protein L11 methyltransferase (293 aa).

Residues T144, G165, D187, and N228 each contribute to the S-adenosyl-L-methionine site.

The protein belongs to the methyltransferase superfamily. PrmA family.

The protein localises to the cytoplasm. It catalyses the reaction L-lysyl-[protein] + 3 S-adenosyl-L-methionine = N(6),N(6),N(6)-trimethyl-L-lysyl-[protein] + 3 S-adenosyl-L-homocysteine + 3 H(+). Functionally, methylates ribosomal protein L11. The sequence is that of Ribosomal protein L11 methyltransferase from Methylococcus capsulatus (strain ATCC 33009 / NCIMB 11132 / Bath).